Here is a 177-residue protein sequence, read N- to C-terminus: uncharacterized protein (177 aa).

This is an uncharacterized protein from Schizosaccharomyces pombe (strain 972 / ATCC 24843) (Fission yeast).